The following is a 56-amino-acid chain: Large ribosomal subunit protein bL33B (56 aa).

This sequence belongs to the bacterial ribosomal protein bL33 family.

The sequence is that of Large ribosomal subunit protein bL33B from Cutibacterium acnes (strain DSM 16379 / KPA171202) (Propionibacterium acnes).